Reading from the N-terminus, the 432-residue chain is MKIEVTPTENINAEITLPGDKSISHRALIIGSLAEGETKIHNFLSSEDTLSTLNILNSIGASIKQISEDEVIVEGKGKDNFIEPSNVLNAKNSGTTMRLMMGVLSAQNFYSVITGDDSLRERPMKRVIDPLSKMGGRFFARKNGEFAPITILGTKDISPLVYKTPVASAQVKSAILLAALYAKGETQVIEPAKSRDHTERMLKYFGADIAQKDTTVVIRGLTKNLEGREFFVPGDLSSASFFIVAALITKNSTLLIKNVGINPTRTGILSVLKMMGADIKIINEKTLNNEPVGDLLVKSSSLKGVEIKGEMIPLIIDEIPILAIAATQAKGKTTIKDAKELRYKETDRIRAITRELKKLGIDILEKEDGFDIIGNQKIRGNCTCESYNDHRIAMSLAIAGLIADNPIEIDNFECVNISFPEFTEIFEKIRSI.

Residues Lys-21, Ser-22, and Arg-26 each coordinate 3-phosphoshikimate. Lys-21 provides a ligand contact to phosphoenolpyruvate. Phosphoenolpyruvate contacts are provided by Gly-94 and Arg-122. 3-phosphoshikimate is bound by residues Ser-168, Gln-170, Asp-317, and Lys-344. Gln-170 lines the phosphoenolpyruvate pocket. Asp-317 functions as the Proton acceptor in the catalytic mechanism. Residues Arg-348 and Arg-391 each coordinate phosphoenolpyruvate.

It belongs to the EPSP synthase family. As to quaternary structure, monomer.

The protein localises to the cytoplasm. It carries out the reaction 3-phosphoshikimate + phosphoenolpyruvate = 5-O-(1-carboxyvinyl)-3-phosphoshikimate + phosphate. It participates in metabolic intermediate biosynthesis; chorismate biosynthesis; chorismate from D-erythrose 4-phosphate and phosphoenolpyruvate: step 6/7. In terms of biological role, catalyzes the transfer of the enolpyruvyl moiety of phosphoenolpyruvate (PEP) to the 5-hydroxyl of shikimate-3-phosphate (S3P) to produce enolpyruvyl shikimate-3-phosphate and inorganic phosphate. In Petrotoga mobilis (strain DSM 10674 / SJ95), this protein is 3-phosphoshikimate 1-carboxyvinyltransferase.